A 423-amino-acid chain; its full sequence is MQQIKFIDLFSGMSGIRKGFEQACRKQSVACKCVFTSEIKPAALEVLKQNYPDEVPYGDITKIETGDIPDFDILLAGFPCQAFSFAGKRLGFEDTRGTLFFDVARILKAKKPKGFILENVEGLVTHDRKDPTQKIGRTLTVILETLEALGYYVSWKVLNAKDFGIPQNRKRIYLTGSLKSKPDLSFETTPSPKLKNILESGLPTESSPFIKKLLKKFPPSELYGKSVKDKRGGKNNIHSWDIELKGAVTEEEKQLLNILLKERRKKKWASEIGIDWMDGMPLTKAQISTFYKHPDLQNILDSLTDKGYLVLEHPKQKIGGQRIKDESLPKGYNIVSGKKSFEINKILDPNDVAPTLVAMDMEHLFVVDNGGLRTLTGKEGLRLFGYPDDYSFDIPKKDKYDLLGNTVAVPVIKAVSERLLHTL.

The SAM-dependent MTase C5-type domain maps to 4 to 423 (IKFIDLFSGM…AVSERLLHTL (420 aa)). The active site involves Cys80.

It belongs to the class I-like SAM-binding methyltransferase superfamily. C5-methyltransferase family.

It carries out the reaction a 2'-deoxycytidine in DNA + S-adenosyl-L-methionine = a 5-methyl-2'-deoxycytidine in DNA + S-adenosyl-L-homocysteine + H(+). Functionally, a methylase that recognizes the double-stranded sequence 5'-GGNNCC-3', methylates C-? on both strands, and protects the DNA from cleavage by the NlaIV endonuclease. This is Type II methyltransferase M.NlaIV (nlaIVM) from Neisseria lactamica.